Reading from the N-terminus, the 125-residue chain is uncharacterized protein (125 aa).

The next 3 helical transmembrane spans lie at 20-42, 57-76, and 81-103; these read RNGG…LTIL, LMNA…GVVV, and YLFV…YMAS.

The protein resides in the cell membrane. This is an uncharacterized protein from Archaeoglobus fulgidus (strain ATCC 49558 / DSM 4304 / JCM 9628 / NBRC 100126 / VC-16).